Here is a 178-residue protein sequence, read N- to C-terminus: ATP-dependent protease subunit HslV (178 aa).

Threonine 5 is a catalytic residue. Na(+) is bound by residues serine 161, cysteine 164, and threonine 167.

It belongs to the peptidase T1B family. HslV subfamily. As to quaternary structure, a double ring-shaped homohexamer of HslV is capped on each side by a ring-shaped HslU homohexamer. The assembly of the HslU/HslV complex is dependent on binding of ATP.

It is found in the cytoplasm. The catalysed reaction is ATP-dependent cleavage of peptide bonds with broad specificity.. Allosterically activated by HslU binding. In terms of biological role, protease subunit of a proteasome-like degradation complex believed to be a general protein degrading machinery. The protein is ATP-dependent protease subunit HslV of Syntrophomonas wolfei subsp. wolfei (strain DSM 2245B / Goettingen).